Consider the following 317-residue polypeptide: Malate dehydrogenase (317 aa).

NAD(+) contacts are provided by residues Gly7–Gly13 and Asp34. Arg81 and Arg87 together coordinate substrate. NAD(+)-binding positions include Asn94 and Val117 to Asn119. Substrate contacts are provided by Asn119 and Arg153. The active-site Proton acceptor is His177. Residue Met231 participates in NAD(+) binding.

The protein belongs to the LDH/MDH superfamily. MDH type 1 family. Homodimer.

It catalyses the reaction (S)-malate + NAD(+) = oxaloacetate + NADH + H(+). Functionally, catalyzes the reversible oxidation of malate to oxaloacetate. This chain is Malate dehydrogenase, found in Actinobacillus pleuropneumoniae serotype 5b (strain L20).